The primary structure comprises 232 residues: MATSAASSEHFEKLHEIFRGLHEDLRGVPERLLGMAGTEEKKKLIRDFDEKQQEANETLAEMEEELRYAPLSFRNPMMSKLRTYRKDLAKLHREVRSTPLTATPGARGDMKYGTYAVENEHMNRLQSQRALLLQGTDSLNRATQSIERSHRIAAETDQIGSEIIEELGEQRDQLERTKSRLVNTSENLSKSRKILRSMSRKVTTNKLLLSIVILLELAILGGLVYYKFLRRH.

The residue at position 2 (alanine 2) is an N-acetylalanine. Interaction with CLINT1 regions lie at residues 2–23 (ATSA…GLHE) and 69–73 (APLSF). The Cytoplasmic portion of the chain corresponds to 2–208 (ATSAASSEHF…SRKVTTNKLL (207 aa)). Positions 35-98 (MAGTEEKKKL…AKLHREVRST (64 aa)) form a coiled coil. Residue threonine 103 is modified to Phosphothreonine. The residue at position 107 (arginine 107) is an Omega-N-methylarginine. Residue serine 138 is modified to Phosphoserine. The stretch at 161 to 198 (SEIIEELGEQRDQLERTKSRLVNTSENLSKSRKILRSM) forms a coiled coil. The helical; Anchor for type IV membrane protein transmembrane segment at 209–229 (LSIVILLELAILGGLVYYKFL) threads the bilayer. At 230–232 (RRH) the chain is on the vesicular side.

The protein belongs to the VTI1 family. Forms a SNARE complex with STX7, STX8 and VAMP8 which functions in the homotypic fusion of late endosomes. Component of the SNARE complex composed of STX7, STX8, VAMP7 and VIT1B that is required for heterotypic fusion of late endosomes with lysosomes. May interact with STX17. Interacts with CLINT1.

It localises to the early endosome membrane. Its subcellular location is the late endosome membrane. The protein resides in the lysosome membrane. The protein localises to the cytoplasmic granule. It is found in the recycling endosome membrane. In terms of biological role, V-SNARE that mediates vesicle transport pathways through interactions with t-SNAREs on the target membrane. These interactions are proposed to mediate aspects of the specificity of vesicle trafficking and to promote fusion of the lipid bilayers. May be concerned with increased secretion of cytokines associated with cellular senescence. The sequence is that of Vesicle transport through interaction with t-SNAREs homolog 1B (VTI1B) from Bos taurus (Bovine).